The following is a 332-amino-acid chain: DNA-directed RNA polymerase subunit alpha (332 aa).

Residues 1 to 226 are alpha N-terminal domain (alpha-NTD); sequence MLIAQRPTLT…ELFGLCRELN (226 aa). Residues 245–332 are alpha C-terminal domain (alpha-CTD); that stretch reads PEMNIPIEDL…GGTFFSPEDE (88 aa).

It belongs to the RNA polymerase alpha chain family. As to quaternary structure, homodimer. The RNAP catalytic core consists of 2 alpha, 1 beta, 1 beta' and 1 omega subunit. When a sigma factor is associated with the core the holoenzyme is formed, which can initiate transcription.

It catalyses the reaction RNA(n) + a ribonucleoside 5'-triphosphate = RNA(n+1) + diphosphate. In terms of biological role, DNA-dependent RNA polymerase catalyzes the transcription of DNA into RNA using the four ribonucleoside triphosphates as substrates. The protein is DNA-directed RNA polymerase subunit alpha of Bifidobacterium adolescentis (strain ATCC 15703 / DSM 20083 / NCTC 11814 / E194a).